Here is a 380-residue protein sequence, read N- to C-terminus: Alanine racemase (380 aa).

Residue Lys-39 is the Proton acceptor; specific for D-alanine of the active site. Lys-39 is subject to N6-(pyridoxal phosphate)lysine. Arg-137 contacts substrate. The Proton acceptor; specific for L-alanine role is filled by Tyr-263. Met-310 contacts substrate.

The protein belongs to the alanine racemase family. The cofactor is pyridoxal 5'-phosphate.

It catalyses the reaction L-alanine = D-alanine. It functions in the pathway amino-acid biosynthesis; D-alanine biosynthesis; D-alanine from L-alanine: step 1/1. Catalyzes the interconversion of L-alanine and D-alanine. May also act on other amino acids. The protein is Alanine racemase (alr) of Macrococcus caseolyticus (strain JCSC5402) (Macrococcoides caseolyticum).